A 176-amino-acid polypeptide reads, in one-letter code: MKTKNNIALIGFMGAGKSSISKLLSEKLGKPLVSTDACIETREGLSISHIFKENGEDYFRQMESKVLEDICQNPNQIIDCGGGIVTRPHNLSIMRLNCLVVYLESRPEDLENRLKNHTNRPLFNAERSDKMLKLLESRLPLYRDAADITVSTHNKSCHEVCEEIEDSLRKYENTSG.

14–19 (GAGKSS) provides a ligand contact to ATP. S18 contributes to the Mg(2+) binding site. The substrate site is built by D36, R60, and G82. Position 120 (R120) interacts with ATP. A substrate-binding site is contributed by R138.

This sequence belongs to the shikimate kinase family. Monomer. Mg(2+) is required as a cofactor.

The protein resides in the cytoplasm. The catalysed reaction is shikimate + ATP = 3-phosphoshikimate + ADP + H(+). Its pathway is metabolic intermediate biosynthesis; chorismate biosynthesis; chorismate from D-erythrose 4-phosphate and phosphoenolpyruvate: step 5/7. Its function is as follows. Catalyzes the specific phosphorylation of the 3-hydroxyl group of shikimic acid using ATP as a cosubstrate. The polypeptide is Shikimate kinase (Dehalococcoides mccartyi (strain ATCC BAA-2100 / JCM 16839 / KCTC 5957 / BAV1)).